A 380-amino-acid chain; its full sequence is MGLPKSFVSMSLLFFSTLLILSLAFNAKNLTQRTNDEVKAMYESWLIKYGKSYNSLGEWERRFEIFKETLRFIDEHNADTNRSYKVGLNQFADLTDEEFRSTYLGFTSGSNKTKVSNRYEPRVGQVLPSYVDWRSAGAVVDIKSQGECGGCWAFSAIATVEGINKIVTGVLISLSEQELIDCGRTQNTRGCNGGYITDGFQFIINNGGINTEENYPYTAQDGECNLDLQNEKYVTIDTYENVPYNNEWALQTAVTYQPVSVALDAAGDAFKHYSSGIFTGPCGTAIDHAVTIVGYGTEGGIDYWIVKNSWDTTWGEEGYMRILRNVGGAGTCGIATMPSYPVKYNNQNHPKPYSSLINPPAFSMSKDGPVGVDDGQRYSA.

Residues 1 to 24 (MGLPKSFVSMSLLFFSTLLILSLA) form the signal peptide. A propeptide spans 25-126 (FNAKNLTQRT…NRYEPRVGQV (102 aa)) (activation peptide). N-linked (GlcNAc...) asparagine glycosylation is found at Asn29, Asn81, and Asn111. Cystine bridges form between Cys148–Cys191, Cys182–Cys224, and Cys282–Cys332. Cys151 is an active-site residue. Residues His288 and Asn308 contribute to the active site.

It belongs to the peptidase C1 family. Fruit, present in small cells of the outer pericarp of mature fruit, but not large cells.

It carries out the reaction Specificity close to that of papain.. In terms of biological role, cysteine protease responsible for the cleavage of kiwellin into kissper and KiTH. In Actinidia deliciosa (Kiwi), this protein is Actinidain.